We begin with the raw amino-acid sequence, 35 residues long: Mu-theraphotoxin-Pn3b (35 aa).

3 cysteine pairs are disulfide-bonded: Cys-2-Cys-16, Cys-9-Cys-21, and Cys-15-Cys-28.

This sequence belongs to the neurotoxin 10 (Hwtx-1) family. 28 (Jztx-11) subfamily. Expressed by the venom gland.

The protein localises to the secreted. In terms of biological role, gating-modifier toxin that targets voltage-gated sodium channels with a preferential activity on Nav1.7/SCN9A. On Nav1.7/SCN9A, the toxin acts by shifting the voltage-dependence of activation to more depolarized potentials, whereas it does not cause significant effect on the voltage-dependence of activation on other sodium channels. Minor effects are observed on the voltage-dependence of steady-state fast inactivation for all sodium channels tested (Nav1.1/SCN1A-Nav1.8/SCN10A). By testing the toxin on channel chimera, it has been shown to interact with the S3-S4 linkers in DII and DIV domains of Nav1.7/SCN9A. In vivo, the toxin dose-dependently reduces OD1-induced spontaneous pain behaviors. The protein is Mu-theraphotoxin-Pn3b of Pamphobeteus nigricolor (Giant blue bloom tarantula).